A 221-amino-acid polypeptide reads, in one-letter code: Protein GrpE (221 aa).

The disordered stretch occupies residues 1 to 43 (MFTNPFGRKKDMSDDQKKNNQPDTEADNAENIKFAADDTELRA). Over residues 8-20 (RKKDMSDDQKKNN) the composition is skewed to basic and acidic residues.

The protein belongs to the GrpE family. Homodimer.

The protein resides in the cytoplasm. In terms of biological role, participates actively in the response to hyperosmotic and heat shock by preventing the aggregation of stress-denatured proteins, in association with DnaK and GrpE. It is the nucleotide exchange factor for DnaK and may function as a thermosensor. Unfolded proteins bind initially to DnaJ; upon interaction with the DnaJ-bound protein, DnaK hydrolyzes its bound ATP, resulting in the formation of a stable complex. GrpE releases ADP from DnaK; ATP binding to DnaK triggers the release of the substrate protein, thus completing the reaction cycle. Several rounds of ATP-dependent interactions between DnaJ, DnaK and GrpE are required for fully efficient folding. The protein is Protein GrpE of Deinococcus radiodurans (strain ATCC 13939 / DSM 20539 / JCM 16871 / CCUG 27074 / LMG 4051 / NBRC 15346 / NCIMB 9279 / VKM B-1422 / R1).